A 147-amino-acid polypeptide reads, in one-letter code: Large ribosomal subunit protein bL9 (147 aa).

This sequence belongs to the bacterial ribosomal protein bL9 family.

Functionally, binds to the 23S rRNA. This chain is Large ribosomal subunit protein bL9, found in Bdellovibrio bacteriovorus (strain ATCC 15356 / DSM 50701 / NCIMB 9529 / HD100).